We begin with the raw amino-acid sequence, 658 residues long: Trimethylamine N-oxide transport system permease protein TmoV (658 aa).

The next 15 helical transmembrane spans lie at 20-40 (LGLA…AGLL), 103-123 (IGPI…YYLG), 127-147 (MALL…WDIA), 153-173 (VLVV…ISAW), 185-205 (VLAV…VIFF), 212-232 (GAVA…TLGL), 273-293 (VIML…PGLG), 300-320 (MGSF…LLAV), 349-369 (FLLM…VVPI), 420-440 (FMLS…ALLV), 447-467 (VLAA…RSVI), 469-489 (LYSV…IGVV), 517-537 (IPAI…ILIF), 585-605 (AVGF…AAFI), and 627-647 (FVLG…IMKW). The region spanning 147-326 (AMQTMSVLVV…LLAVTLDRMS (180 aa)) is the ABC transmembrane type-1 1 domain. Positions 465-644 (SVITLYSVLA…LMALTFDMVI (180 aa)) constitute an ABC transmembrane type-1 2 domain.

It belongs to the binding-protein-dependent transport system permease family. The complex is probably composed of two ATP-binding proteins (TmoW), two transmembrane proteins (TmoV) and a solute-binding protein (TmoX).

The protein localises to the cell inner membrane. Functionally, part of the ABC transporter complex TmoXWV involved in trimethylamine N-oxide (TMAO) import. Responsible for the translocation of the substrate across the membrane. Is specific for TMAO and essential for TMAO metabolism. This chain is Trimethylamine N-oxide transport system permease protein TmoV, found in Ruegeria pomeroyi (strain ATCC 700808 / DSM 15171 / DSS-3) (Silicibacter pomeroyi).